The primary structure comprises 347 residues: Dihydroorotate dehydrogenase (quinone) (347 aa).

Residues 62–66 and Ala86 each bind FMN; that span reads AGLDK. Lys66 serves as a coordination point for substrate. Residue 111–115 participates in substrate binding; that stretch reads NRMGF. FMN is bound by residues Asn139 and Asn172. Asn172 serves as a coordination point for substrate. The Nucleophile role is filled by Ser175. Position 177 (Asn177) interacts with substrate. FMN contacts are provided by Lys217 and Thr245. 246–247 is a substrate binding site; sequence NT. FMN is bound by residues Gly268, Gly297, and 318–319; that span reads YT.

This sequence belongs to the dihydroorotate dehydrogenase family. Type 2 subfamily. Monomer. The cofactor is FMN.

It localises to the cell membrane. It catalyses the reaction (S)-dihydroorotate + a quinone = orotate + a quinol. Its pathway is pyrimidine metabolism; UMP biosynthesis via de novo pathway; orotate from (S)-dihydroorotate (quinone route): step 1/1. Functionally, catalyzes the conversion of dihydroorotate to orotate with quinone as electron acceptor. The protein is Dihydroorotate dehydrogenase (quinone) of Coxiella burnetii (strain CbuK_Q154) (Coxiella burnetii (strain Q154)).